The chain runs to 180 residues: Glycodelin (180 aa).

The N-terminal stretch at 1 to 18 is a signal peptide; it reads MLCLLLTLGVALVCGVPA. N-linked (GlcNAc...) (complex) asparagine glycosylation is found at Asn-46 and Asn-81. Cystine bridges form between Cys-84–Cys-178 and Cys-124–Cys-137.

This sequence belongs to the calycin superfamily. Lipocalin family. Homodimer. Post-translationally, four distinct glycoforms A, C, F and S arise from different N-linked oligosaccharide chains at amino acid residues Asn-46 and Asn-81. Glycodelin-A and -F are taken up by the cumulus cells in which partial deglycosylation takes place to produce glycodelin-C. In terms of tissue distribution, this protein is, the main protein synthesized and secreted in the endometrium from mid-luteal phase of the menstrual cycle and during the first semester of pregnancy. Glycodelin-A is expressed in amniotic fluid, endometrium/decidua and maternal serum (at protein level). Glycodelin-F is expressed in follicular fluid, luteinized granulosa cells and the oviduct (at protein level). Glycodelin-S is expressed in seminal plasma and seminal vesicles (at protein level). Glycodelin-C is detected in cumulus cells (at protein level), but cumulus cells do not synthesize Glycodelin-C but take up and convert glycodelin-A and -F vis glycan remodeling.

The protein resides in the secreted. Glycoprotein that regulates critical steps during fertilization and also has immunomonomodulatory effects. Four glycoforms, namely glycodelin-S, -A, -F and -C have been identified in reproductive tissues that differ in glycosylation and biological activity. Glycodelin-A has contraceptive and immunosuppressive activities. Glycodelin-C stimulates binding of spermatozoa to the zona pellucida. Glycodelin-F inhibits spermatozoa-zona pellucida binding and significantly suppresses progesterone-induced acrosome reaction of spermatozoa. Glycodelin-S in seminal plasma maintains the uncapacitated state of human spermatozoa. This chain is Glycodelin (PAEP), found in Homo sapiens (Human).